The following is an 858-amino-acid chain: MSYTMEPLGNPSYRRVMTETRATYSRASASPSSGFRSQSWSRGSGSTVSSSYKRTNLGAPRTAYGSTVLSSAESLDVSQSSLLNGAAELKLSRSNEKEQLQGLNDRFAGYIEKVHYLEQQNKEIEAELAALRQKHAGRAQLGDAYEQELRELRGALEQVSHEKAQIQLDSEHIEEDIQRLRERFEDEARLRDETEATIAALRKEMEEASLMRAELDKKVQSLQDEVAFLRGNHEEEVAELLAQLQASHATVERKDYLKTDLTTALKEIRAQLECQSDHNMHQAEEWFKCRYAKLTEAAEQNKEAIRSAKEEIAEYRRQLQSKSIELESVRGTKESLERQLSDIEERHNNDLTTYQDTIHQLENELRGTKWEMARHLREYQDLLNVKMALDIEIAAYRKLLEGEETRFSAFSGSITGPIFTHRQPSVTIASTKIQKTKIEPPKLKVQHKFVEEIIEETKVEDEKSEMEDALSAIAEEMAAKAQEEEQEEEKAEEEAVEEEAVSEKAAEQAAEEEEKEEEEAEEEEAAKSDAAEEGGSKKEEIEEKEEGEEAEEEEAEAKGKAEEAGAKVEKVKSPPAKSPPKSPPKSPVTEQAKAVQKAAAEVGKDQKAEKAAEKAAKEEKAASPEKPATPKVTSPEKPATPEKPPTPEKAITPEKVRSPEKPTTPEKVVSPEKPASPEKPRTPEKPASPEKPATPEKPRTPEKPATPEKPRSPEKPSSPLKDEKAVVEESITVTKVTKVTAEVEVSKEARKEDIAVNGEVEEKKDEAKEKEAEEEEKGVVTNGLDVSPVDEKGEKVVVTKKAEKITSEGGDSTTTYITKSVTVTQKVEEHEESFEEKLVSTKKVEKVTSHAVVKEIKE.

Residue Ser2 is modified to N-acetylserine. The segment at 2-99 is head; it reads SYTMEPLGNP…KLSRSNEKEQ (98 aa). Residues 22–57 form a disordered region; it reads ATYSRASASPSSGFRSQSWSRGSGSTVSSSYKRTNL. Low complexity predominate over residues 30–54; it reads SPSSGFRSQSWSRGSGSTVSSSYKR. The O-linked (GlcNAc) threonine glycan is linked to Thr47. An IF rod domain is found at 96 to 407; sequence EKEQLQGLND…KLLEGEETRF (312 aa). Residues 100-131 form a coil 1A region; the sequence is LQGLNDRFAGYIEKVHYLEQQNKEIEAELAAL. Residues 132-144 are linker 1; sequence RQKHAGRAQLGDA. The interval 145-243 is coil 1B; the sequence is YEQELRELRG…EEEVAELLAQ (99 aa). The interval 244 to 260 is linker 12; it reads LQASHATVERKDYLKTD. The tract at residues 261 to 282 is coil 2A; the sequence is LTTALKEIRAQLECQSDHNMHQ. The segment at 283 to 286 is linker 2; that stretch reads AEEW. The segment at 287-407 is coil 2B; that stretch reads FKCRYAKLTE…KLLEGEETRF (121 aa). The tail stretch occupies residues 408–858; that stretch reads SAFSGSITGP…SHAVVKEIKE (451 aa). The O-linked (GlcNAc) threonine glycan is linked to Thr427. The interval 478-788 is disordered; that stretch reads AAKAQEEEQE…VVTNGLDVSP (311 aa). Composition is skewed to acidic residues over residues 484 to 500 and 509 to 524; these read EEQE…EEEA and AAEE…EEEE. Residues 525-541 are compositionally biased toward basic and acidic residues; the sequence is AAKSDAAEEGGSKKEEI. Residues 542–555 are compositionally biased toward acidic residues; the sequence is EEKEEGEEAEEEEA. A compositionally biased stretch (basic and acidic residues) spans 556-572; the sequence is EAKGKAEEAGAKVEKVK. Residues 576-586 show a composition bias toward pro residues; the sequence is AKSPPKSPPKS. Over residues 590–601 the composition is skewed to low complexity; sequence EQAKAVQKAAAE. A compositionally biased stretch (basic and acidic residues) spans 602–623; that stretch reads VGKDQKAEKAAEKAAKEEKAAS. Residues 624–637 are compositionally biased toward low complexity; it reads PEKPATPKVTSPEK. 2 stretches are compositionally biased toward basic and acidic residues: residues 651 to 664 and 675 to 727; these read ITPE…KPTT and ASPE…KAVV. A compositionally biased stretch (low complexity) spans 728 to 743; the sequence is EESITVTKVTKVTAEV. Residues 744-771 show a composition bias toward basic and acidic residues; that stretch reads EVSKEARKEDIAVNGEVEEKKDEAKEKE.

Belongs to the intermediate filament family. There are a number of repeats of the tripeptide K-S-P, NFM is phosphorylated on a number of the serines in this motif. It is thought that phosphorylation of NFM results in the formation of interfilament cross bridges that are important in the maintenance of axonal caliber. Post-translationally, phosphorylation seems to play a major role in the functioning of the larger neurofilament polypeptides (NF-M and NF-H), the levels of phosphorylation being altered developmentally and coincident with a change in the neurofilament function.

It is found in the cytoplasm. The protein localises to the cytoskeleton. Its subcellular location is the cell projection. The protein resides in the axon. Functionally, neurofilaments usually contain three intermediate filament proteins: NEFL, NEFM, and NEFH which are involved in the maintenance of neuronal caliber. May additionally cooperate with other neuronal intermediate filament proteins to form neuronal filamentous networks. This chain is Neurofilament medium polypeptide (NEFM), found in Gallus gallus (Chicken).